Reading from the N-terminus, the 1039-residue chain is Potassium-transporting ATPase alpha chain 2 (1039 aa).

At 1–102 the chain is on the cytoplasmic side; the sequence is MHQKTPEIYS…NSLTPPKQTP (102 aa). A helical transmembrane segment spans residues 103–123; it reads EIVKFLKQMVGGFSILLWVGA. Over 124–146 the chain is Lumenal; sequence FLCWIAYGIQYSSDKSASLNNVY. Residues 147-167 traverse the membrane as a helical segment; it reads LGCVLGLVVILTGIFAYYQEA. Over 168–303 the chain is Cytoplasmic; that stretch reads KSTNIMSSFN…NEKTPIAIEI (136 aa). A helical transmembrane segment spans residues 304 to 323; that stretch reads EHFVHIVAGVAVSIGILFFI. The Lumenal segment spans residues 324-335; it reads IAVSLKYQVLDS. A helical membrane pass occupies residues 336–353; the sequence is IIFLIGIIVANVPEGLLA. The Cytoplasmic portion of the chain corresponds to 354 to 787; the sequence is TVTVTLSLTA…EEGRLIFDNL (434 aa). Asp391 (4-aspartylphosphate intermediate) is an active-site residue. Asp732 and Asp736 together coordinate Mg(2+). Residues 788–807 form a helical membrane-spanning segment; that stretch reads KKTIAYSLTKNIAELCPFLI. The Lumenal segment spans residues 808–817; that stretch reads YIIVGLPLPI. A helical transmembrane segment spans residues 818-838; that stretch reads GTITILFIDLGTDIIPSIALA. The Cytoplasmic segment spans residues 839–858; the sequence is YEKAESDIMNRKPRHKNKDR. The helical transmembrane segment at 859 to 881 threads the bilayer; it reads LVNQPLAVYSYLHIGLMQALGAF. Residues 882 to 933 are Lumenal-facing; sequence LVYFTVYAQEGFLPRTLINLRVEWEKDYVNDLKDSYGQEWTRYQREYLEWTG. Residues 934 to 953 form a helical membrane-spanning segment; sequence YTAFFVGILVQQIADLIIRK. The Cytoplasmic segment spans residues 954–967; that stretch reads TRRNSIFQQGLFRN. Phosphoserine; by PKA is present on Ser958. Residues 968-986 traverse the membrane as a helical segment; sequence KVIWVGITSQIIIGLILSY. At 987 to 1001 the chain is on the lumenal side; sequence GLGSVTALSFTMLRA. The chain crosses the membrane as a helical span at residues 1002-1022; it reads QYWFVAVPHAILIWVYDEVRK. At 1023 to 1039 the chain is on the cytoplasmic side; sequence LFIRLYPGSWWDKNMYY.

Belongs to the cation transport ATPase (P-type) (TC 3.A.3) family. Type IIC subfamily. The ATPase pump is composed of a catalytic alpha subunit and an auxiliary non-catalytic beta subunit. The alpha subunit pairs with the beta subunit of gastric H(+)/K(+) ATPase ATP4B or the beta subunit of Na(+)/K(+) ATPases ATP1B1 and ATP1B3; this interaction is required for the formation of a functionally active pump and its targeting at the plasma membrane. In terms of tissue distribution, expressed in airway epithelial cells (at protein level). Found in skin and kidney. Detected in prostate basal cells (at protein level). Expression is increased in benign prostate hyperplasia and tumor tissues (at protein level).

It is found in the apical cell membrane. The enzyme catalyses K(+)(out) + ATP + H2O + H(+)(in) = K(+)(in) + ADP + phosphate + 2 H(+)(out). It carries out the reaction K(+)(out) + Na(+)(in) + ATP + H2O = K(+)(in) + Na(+)(out) + ADP + phosphate + H(+). The ATPase activity is regulated by monovalent cations and pH. Up-regulated by K(+) ions in a dose-dependent way. Down-regulated by Na(+) ions. Inhibited by Na(+)/K(+)-ATPase inhibitor ouabain and H(+)/K(+)-ATPase inhibitor SCH-28080 with an intermediate sensitivity to completely resistant Na(+)/K(+)-ATPases and highly sensitive H(+)/K(+)-ATPases. The catalytic subunit of a H(+)/K(+) ATPase and/or Na(+)/K(+) ATPase pump which transports K(+) ions in exchange for Na(+) and/or H(+) ions across the apical membrane of epithelial cells. Uses ATP as an energy source to pump K(+) ions into the cell while transporting Na(+) and/or H(+) ions to the extracellular compartment. Involved in the maintenance of electrolyte homeostasis through K(+) ion absorption in kidney and colon. In the airway epithelium, may play a primary role in mucus acidification regulating its viscosity and clearance. The chain is Potassium-transporting ATPase alpha chain 2 from Homo sapiens (Human).